A 41-amino-acid chain; its full sequence is Cytochrome b559 subunit beta (41 aa).

The chain crosses the membrane as a helical span at residues 16–32 (WLAVHALAVPTVFFLGS). His-20 is a heme binding site.

The protein belongs to the PsbE/PsbF family. As to quaternary structure, heterodimer of an alpha subunit and a beta subunit. PSII is composed of 1 copy each of membrane proteins PsbA, PsbB, PsbC, PsbD, PsbE, PsbF, PsbH, PsbI, PsbJ, PsbK, PsbL, PsbM, PsbT, PsbX, PsbY, PsbZ, Psb30/Ycf12, at least 3 peripheral proteins of the oxygen-evolving complex and a large number of cofactors. It forms dimeric complexes. Heme b serves as cofactor.

The protein resides in the plastid. Its subcellular location is the chloroplast thylakoid membrane. Its function is as follows. This b-type cytochrome is tightly associated with the reaction center of photosystem II (PSII). PSII is a light-driven water:plastoquinone oxidoreductase that uses light energy to abstract electrons from H(2)O, generating O(2) and a proton gradient subsequently used for ATP formation. It consists of a core antenna complex that captures photons, and an electron transfer chain that converts photonic excitation into a charge separation. The sequence is that of Cytochrome b559 subunit beta from Nephroselmis olivacea (Green alga).